We begin with the raw amino-acid sequence, 400 residues long: Acetate kinase (400 aa).

Residue asparagine 10 coordinates Mg(2+). Lysine 17 provides a ligand contact to ATP. Arginine 91 provides a ligand contact to substrate. Aspartate 150 serves as the catalytic Proton donor/acceptor. Residues 210–214, 285–287, and 333–337 each bind ATP; these read HLGNG, DCR, and GIGEN. Glutamate 387 contributes to the Mg(2+) binding site.

The protein belongs to the acetokinase family. Homodimer. The cofactor is Mg(2+). Mn(2+) serves as cofactor.

It localises to the cytoplasm. The catalysed reaction is acetate + ATP = acetyl phosphate + ADP. It participates in metabolic intermediate biosynthesis; acetyl-CoA biosynthesis; acetyl-CoA from acetate: step 1/2. In terms of biological role, catalyzes the formation of acetyl phosphate from acetate and ATP. Can also catalyze the reverse reaction. The polypeptide is Acetate kinase (Pectobacterium atrosepticum (strain SCRI 1043 / ATCC BAA-672) (Erwinia carotovora subsp. atroseptica)).